Here is a 344-residue protein sequence, read N- to C-terminus: Follistatin (344 aa).

A signal peptide spans 1–29 (MARPRHQPGGLCLLLLLLCQFMEDRSAQA). One can recognise a TB domain in the interval 30–103 (GNCWLRQAKN…TCENVDCGPG (74 aa)). 8 disulfide bridges follow: Cys32–Cys55, Cys42–Cys88, Cys56–Cys91, Cys95–Cys106, Cys100–Cys116, Cys118–Cys150, Cys122–Cys143, and Cys132–Cys164. One can recognise a Follistatin-like 1 domain in the interval 94-117 (TCENVDCGPGKKCRMNKKNKPRCV). Kazal-like domains lie at 112–166 (NKPR…KCKK), 186–241 (NAYC…KCIK), and 261–318 (KVGR…SCNS). The N-linked (GlcNAc...) asparagine glycan is linked to Asn124. Residues 167–190 (TCRDVFCPGSSTCVVDQTNNAYCV) enclose the Follistatin-like 2 domain. 3 disulfide bridges follow: Cys192–Cys225, Cys196–Cys218, and Cys207–Cys239. A Follistatin-like 3 domain is found at 244-268 (SCDDIQCTGGKKCLWDFKVGRGRCS). Disulfide bonds link Cys270-Cys302, Cys274-Cys295, and Cys284-Cys316. Asn288 carries an N-linked (GlcNAc...) asparagine glycan. Residues 316–344 (CNSISEDTEDEEEDEDQDYSFPISSILEW) are disordered. A compositionally biased stretch (acidic residues) spans 321–333 (EDTEDEEEDEDQD).

Interacts with GDF11. Interacts with activin A/INHBA. Interacts with myostatin/MSTN.

It is found in the secreted. Its subcellular location is the nucleus. The protein resides in the nucleolus. Its function is as follows. Multifunctional regulatory protein whose primary function is to antagonize members of the transforming growth factor beta (TGF-beta) superfamily including activin, myostatin, GDF11 or bone morphogenetic proteins (BMPs). Mechanistically, binds to these ligands in the extracellular space, blocking their type II receptor-binding site to inhibit downstream signaling. Plays an essential role in muscle fiber formation and growth both by preventing the repressive effects of myostatin and through SMAD3/AKT/mTOR signaling independently of myostatin. Also promotes neural differentiation by antagonizing the action BMP4. Acts as a specific inhibitor of the biosynthesis and secretion of pituitary follicle stimulating hormone (FSH) by sequestering activin A/INHBA. On the other hand, translocates into the nucleus where it down-regulates rRNA synthesis and ribosome biogenesis to maintain cellular energy homeostasis by binding to rDNA. In Bos taurus (Bovine), this protein is Follistatin.